A 125-amino-acid polypeptide reads, in one-letter code: Holo-[acyl-carrier-protein] synthase (125 aa).

Residues Asp8 and Glu57 each contribute to the Mg(2+) site.

The protein belongs to the P-Pant transferase superfamily. AcpS family. It depends on Mg(2+) as a cofactor.

The protein localises to the cytoplasm. It carries out the reaction apo-[ACP] + CoA = holo-[ACP] + adenosine 3',5'-bisphosphate + H(+). Transfers the 4'-phosphopantetheine moiety from coenzyme A to a Ser of acyl-carrier-protein. This is Holo-[acyl-carrier-protein] synthase from Neisseria meningitidis serogroup A / serotype 4A (strain DSM 15465 / Z2491).